We begin with the raw amino-acid sequence, 134 residues long: UPF0412 protein YaaI (134 aa).

Positions Met1 to Ala23 are cleaved as a signal peptide.

The protein belongs to the UPF0412 family.

This Escherichia coli O157:H7 protein is UPF0412 protein YaaI.